The chain runs to 323 residues: o-succinylbenzoate synthase (323 aa).

Catalysis depends on lysine 134, which acts as the Proton donor. Residues aspartate 162, glutamate 191, and aspartate 214 each coordinate Mg(2+). Residue lysine 236 is the Proton acceptor of the active site.

Belongs to the mandelate racemase/muconate lactonizing enzyme family. MenC type 1 subfamily. The cofactor is a divalent metal cation.

The enzyme catalyses (1R,6R)-6-hydroxy-2-succinyl-cyclohexa-2,4-diene-1-carboxylate = 2-succinylbenzoate + H2O. It functions in the pathway quinol/quinone metabolism; 1,4-dihydroxy-2-naphthoate biosynthesis; 1,4-dihydroxy-2-naphthoate from chorismate: step 4/7. Its pathway is quinol/quinone metabolism; menaquinone biosynthesis. Its function is as follows. Converts 2-succinyl-6-hydroxy-2,4-cyclohexadiene-1-carboxylate (SHCHC) to 2-succinylbenzoate (OSB). In Yersinia pseudotuberculosis serotype I (strain IP32953), this protein is o-succinylbenzoate synthase.